The chain runs to 455 residues: Nuclear distribution protein nudF (455 aa).

The region spanning 9–41 (QAEELHKSMIAYLVASDLPDTAAALRREVNLSE) is the LisH domain. A coiled-coil region spans residues 61–88 (TSIARLQKKIMDLESRNATLQSELDNST). 8 WD repeats span residues 113-154 (SHRD…RTLK), 156-196 (HTRA…KNIR), 200-239 (GHDH…CVKT), 242-281 (GHTD…NIEH), 287-347 (GHEN…LMTL), 349-388 (GHDS…KCVK), 392-438 (AHES…IQMR), and 440-455 (VVAT…IFAG). The disordered stretch occupies residues 408–431 (KNVPGGDGAAEGEGNDKNGAGSEN).

The protein belongs to the WD repeat LIS1/nudF family. In terms of assembly, self-associates. Interacts with nudE and dynein.

It is found in the cytoplasm. Its subcellular location is the cytoskeleton. The protein resides in the spindle pole. Its function is as follows. Positively regulates the activity of the minus-end directed microtubule motor protein dynein. May enhance dynein-mediated microtubule sliding by targeting dynein to the microtubule plus end. Required for nuclear migration during vegetative growth as well as development. Required for retrograde early endosome (EE) transport from the hyphal tip. Required for localization of dynein to the mitotic spindle poles. Recruits additional proteins to the dynein complex at SPBs. This is Nuclear distribution protein nudF from Aspergillus flavus (strain ATCC 200026 / FGSC A1120 / IAM 13836 / NRRL 3357 / JCM 12722 / SRRC 167).